A 1818-amino-acid chain; its full sequence is U3 small nucleolar RNA-associated protein 10 (1818 aa).

A helical transmembrane segment spans residues 568 to 588 (TDFYLLIPLILLALFDNSKLI). Residues 1778-1816 (LVPYIAELLEDDDEEVEMEVRRGLVRVIENVLGEPLDRY) form an HEAT repeat.

The protein belongs to the HEATR1/UTP10 family. In terms of assembly, component of the ribosomal small subunit (SSU) processome.

It localises to the nucleus. The protein localises to the nucleolus. Its subcellular location is the membrane. Functionally, involved in nucleolar processing of pre-18S ribosomal RNA. Involved in ribosome biosynthesis. This is U3 small nucleolar RNA-associated protein 10 from Candida albicans (strain SC5314 / ATCC MYA-2876) (Yeast).